Consider the following 173-residue polypeptide: Chromophore lyase CpcS/CpeS 3 (173 aa).

Belongs to the CpcS/CpeS biliprotein lyase family.

Functionally, covalently attaches a chromophore to Cys residue(s) of phycobiliproteins. The sequence is that of Chromophore lyase CpcS/CpeS 3 from Trichodesmium erythraeum (strain IMS101).